A 112-amino-acid chain; its full sequence is Cytochrome c (112 aa).

The heme c site is built by cysteine 23, cysteine 26, and histidine 27. Position 81 is an N6,N6,N6-trimethyllysine (lysine 81). Position 89 (methionine 89) interacts with heme c. At lysine 95 the chain carries N6,N6,N6-trimethyllysine.

Belongs to the cytochrome c family. In terms of processing, binds 1 heme c group covalently per subunit.

The protein localises to the mitochondrion intermembrane space. Electron carrier protein. The oxidized form of the cytochrome c heme group can accept an electron from the heme group of the cytochrome c1 subunit of cytochrome reductase. Cytochrome c then transfers this electron to the cytochrome oxidase complex, the final protein carrier in the mitochondrial electron-transport chain. The sequence is that of Cytochrome c (CC-1) from Arabidopsis thaliana (Mouse-ear cress).